The chain runs to 1431 residues: Probable serine/threonine-protein kinase irlA (1431 aa).

Residues 1 to 10 (MTKPIFKSKT) are compositionally biased toward basic residues. Disordered stretches follow at residues 1-81 (MTKP…EKEE) and 736-879 (KREK…NNNK). The span at 25 to 43 (NEDEEEEEGGEEGGEEEEI) shows a compositional bias: acidic residues. Residues 46–67 (NKNSNNSSSNSNNNNNDNNNNN) are compositionally biased toward low complexity. Coiled-coil stretches lie at residues 57–97 (NNNN…LDME) and 715–759 (KKRS…NNNN). The span at 68 to 81 (GEERKVEKEEEKEE) shows a compositional bias: basic and acidic residues. The segment covering 738-749 (EKKKQKDKKKNK) has biased composition (basic residues). The span at 750–776 (SNQNQKNNNNQNNQSNNNKINSPSSNK) shows a compositional bias: low complexity. Positions 777-791 (LTQNVTPPSSPVNII) are enriched in polar residues. A compositionally biased stretch (low complexity) spans 792–812 (TSSSTTSSSTSSTTSSTTSST). The span at 821–838 (TLPIKTSSPTKPESQKPS) shows a compositional bias: polar residues. A compositionally biased stretch (low complexity) spans 854–878 (NNNNNNNNNNNNNNNNNNNNNNNNN). The stretch at 860 to 971 (NNNNNNNNNN…QESIQLNQTL (112 aa)) forms a coiled coil. The Protein kinase domain maps to 987–1261 (RDENNIIGRG…IDTILNHPLF (275 aa)). Residues 993 to 1001 (IGRGSNGTL) and Lys1016 contribute to the ATP site. Asp1130 serves as the catalytic Proton acceptor. Residues 1264–1431 (TNEKIKFYES…NSKDYLNIKF (168 aa)) enclose the KEN domain.

Belongs to the protein kinase superfamily. Ser/Thr protein kinase family.

The enzyme catalyses L-seryl-[protein] + ATP = O-phospho-L-seryl-[protein] + ADP + H(+). It carries out the reaction L-threonyl-[protein] + ATP = O-phospho-L-threonyl-[protein] + ADP + H(+). The protein is Probable serine/threonine-protein kinase irlA (irlA) of Dictyostelium discoideum (Social amoeba).